The chain runs to 327 residues: Aromatase (327 aa).

Position 315 (Cys315) interacts with heme.

This sequence belongs to the cytochrome P450 family. Heme is required as a cofactor.

Its subcellular location is the membrane. It catalyses the reaction testosterone + 3 reduced [NADPH--hemoprotein reductase] + 3 O2 = 17beta-estradiol + formate + 3 oxidized [NADPH--hemoprotein reductase] + 4 H2O + 4 H(+). The catalysed reaction is androst-4-ene-3,17-dione + 3 reduced [NADPH--hemoprotein reductase] + 3 O2 = estrone + formate + 3 oxidized [NADPH--hemoprotein reductase] + 4 H2O + 4 H(+). Its function is as follows. Catalyzes the formation of aromatic C18 estrogens from C19 androgens. This Coturnix japonica (Japanese quail) protein is Aromatase (CYP19A1).